Consider the following 107-residue polypeptide: uncharacterized protein (107 aa).

This is an uncharacterized protein from Microplitis demolitor (Parasitoid wasp).